Consider the following 876-residue polypeptide: DNA gyrase subunit A (876 aa).

The region spanning 34–532 (LPDVRDGLKP…NSVDINIEDL (499 aa)) is the Topo IIA-type catalytic domain. Tyrosine 122 serves as the catalytic O-(5'-phospho-DNA)-tyrosine intermediate. A GyrA-box motif is present at residues 559 to 565 (QRRGGKG). A disordered region spans residues 844-876 (DEELDAIDGSAAEGDEDIAPEADTDDDIAEDEE). A compositionally biased stretch (acidic residues) spans 856 to 876 (EGDEDIAPEADTDDDIAEDEE).

This sequence belongs to the type II topoisomerase GyrA/ParC subunit family. Heterotetramer, composed of two GyrA and two GyrB chains. In the heterotetramer, GyrA contains the active site tyrosine that forms a transient covalent intermediate with DNA, while GyrB binds cofactors and catalyzes ATP hydrolysis.

The protein resides in the cytoplasm. It carries out the reaction ATP-dependent breakage, passage and rejoining of double-stranded DNA.. Its function is as follows. A type II topoisomerase that negatively supercoils closed circular double-stranded (ds) DNA in an ATP-dependent manner to modulate DNA topology and maintain chromosomes in an underwound state. Negative supercoiling favors strand separation, and DNA replication, transcription, recombination and repair, all of which involve strand separation. Also able to catalyze the interconversion of other topological isomers of dsDNA rings, including catenanes and knotted rings. Type II topoisomerases break and join 2 DNA strands simultaneously in an ATP-dependent manner. The chain is DNA gyrase subunit A from Klebsiella oxytoca.